The sequence spans 422 residues: Choline monooxygenase, chloroplastic (422 aa).

Residues 1–47 constitute a chloroplast transit peptide; it reads MMTTLTATVPEFLPPSLKSTRGYFNSHSEFGVSISKFSRRRFHNPTR. Residues 96–203 enclose the Rieske domain; that stretch reads WQAVGYSDQI…VAVWGPFVLL (108 aa). Residues Cys138, His140, Cys157, and His160 each coordinate [2Fe-2S] cluster. 2 residues coordinate Fe cation: His269 and His274.

Belongs to the choline monooxygenase family. Requires [2Fe-2S] cluster as cofactor. Fe cation serves as cofactor. The cofactor is Mg(2+).

Its subcellular location is the plastid. The protein localises to the chloroplast stroma. The enzyme catalyses choline + 2 reduced [2Fe-2S]-[ferredoxin] + O2 + 2 H(+) = betaine aldehyde hydrate + 2 oxidized [2Fe-2S]-[ferredoxin] + H2O. It functions in the pathway amine and polyamine biosynthesis; betaine biosynthesis via choline pathway; betaine aldehyde from choline (monooxygenase route): step 1/1. Functionally, catalyzes the first step of the osmoprotectant glycine betaine synthesis. This is Choline monooxygenase, chloroplastic from Arabidopsis thaliana (Mouse-ear cress).